A 245-amino-acid chain; its full sequence is P2Y purinoceptor 13 (245 aa).

Residues 1 to 9 (QLRAFVCRL) are Extracellular-facing. An intrachain disulfide couples Cys7 to Cys85. The helical transmembrane segment at 10–30 (SSVIFYETMYVGIVLLGLIAF) threads the bilayer. Over 31 to 35 (DRFLK) the chain is Cytoplasmic. A helical membrane pass occupies residues 36–56 (IIRPLRNIFLKKTVFAKTVSV). Residues 57–85 (FIWSFFFFISLPNMILSNKEATPSSVKKC) lie on the Extracellular side of the membrane. A helical transmembrane segment spans residues 86 to 106 (ASLKGPLGLKWHQIVNNISQF). Residues 107 to 126 (IFWTVFVLMLVFYVVIAKKV) are Cytoplasmic-facing. The chain crosses the membrane as a helical span at residues 127–147 (YDSYRKSKSKDRKNNKKLEGK). Residues 148–174 (VFVVVAVFFVCFAPFHFTRVPYTYSQT) lie on the Extracellular side of the membrane. The helical transmembrane segment at 175-195 (NNKTDCRLQNQLFIAKETTLF) threads the bilayer. The Cytoplasmic segment spans residues 196 to 245 (LAATNICMDPLIYIFLCKKFTEKLPCMRGRKTIASSQENQSSQTDNITLG).

This sequence belongs to the G-protein coupled receptor 1 family.

Its subcellular location is the cell membrane. Functionally, receptor for ADP. Coupled to G(i)-proteins. May play a role in hematopoiesis and the immune system. The chain is P2Y purinoceptor 13 (P2RY13) from Macaca fascicularis (Crab-eating macaque).